The primary structure comprises 660 residues: Bifunctional polymyxin resistance protein ArnA (660 aa).

The tract at residues 1-304 (MKAVIFAYHD…TLGLVAGARL (304 aa)) is formyltransferase ArnAFT. Residue H104 is the Proton donor; for formyltransferase activity of the active site. Residues R114 and 136–140 (VKRAD) each bind (6R)-10-formyltetrahydrofolate. The tract at residues 314–660 (RRIRVLILGV…RSVDVAERAS (347 aa)) is dehydrogenase ArnADH. NAD(+) contacts are provided by residues D347 and 368–369 (DI). UDP-alpha-D-glucuronate contacts are provided by residues A393, Y398, and 432 to 433 (TS). E434 (proton acceptor; for decarboxylase activity) is an active-site residue. UDP-alpha-D-glucuronate is bound by residues R460, N492, 526–535 (KLIDGGQQKR), and Y613. The active-site Proton donor; for decarboxylase activity is the R619.

The protein in the N-terminal section; belongs to the Fmt family. UDP-L-Ara4N formyltransferase subfamily. It in the C-terminal section; belongs to the NAD(P)-dependent epimerase/dehydratase family. UDP-glucuronic acid decarboxylase subfamily. Homohexamer, formed by a dimer of trimers.

The catalysed reaction is UDP-alpha-D-glucuronate + NAD(+) = UDP-beta-L-threo-pentopyranos-4-ulose + CO2 + NADH. The enzyme catalyses UDP-4-amino-4-deoxy-beta-L-arabinose + (6R)-10-formyltetrahydrofolate = UDP-4-deoxy-4-formamido-beta-L-arabinose + (6S)-5,6,7,8-tetrahydrofolate + H(+). It participates in nucleotide-sugar biosynthesis; UDP-4-deoxy-4-formamido-beta-L-arabinose biosynthesis; UDP-4-deoxy-4-formamido-beta-L-arabinose from UDP-alpha-D-glucuronate: step 1/3. Its pathway is nucleotide-sugar biosynthesis; UDP-4-deoxy-4-formamido-beta-L-arabinose biosynthesis; UDP-4-deoxy-4-formamido-beta-L-arabinose from UDP-alpha-D-glucuronate: step 3/3. It functions in the pathway bacterial outer membrane biogenesis; lipopolysaccharide biosynthesis. Bifunctional enzyme that catalyzes the oxidative decarboxylation of UDP-glucuronic acid (UDP-GlcUA) to UDP-4-keto-arabinose (UDP-Ara4O) and the addition of a formyl group to UDP-4-amino-4-deoxy-L-arabinose (UDP-L-Ara4N) to form UDP-L-4-formamido-arabinose (UDP-L-Ara4FN). The modified arabinose is attached to lipid A and is required for resistance to polymyxin and cationic antimicrobial peptides. The chain is Bifunctional polymyxin resistance protein ArnA from Salmonella choleraesuis (strain SC-B67).